The sequence spans 393 residues: Homoserine O-succinyltransferase (393 aa).

The 311-residue stretch at 62-372 (NAVLVCHALN…PHGHDAFLLD (311 aa)) folds into the AB hydrolase-1 domain. Ser168 acts as the Nucleophile in catalysis. A substrate-binding site is contributed by Arg238. Active-site residues include Asp333 and His366. Asp367 contributes to the substrate binding site.

This sequence belongs to the AB hydrolase superfamily. MetX family. Homodimer.

The protein resides in the cytoplasm. It carries out the reaction L-homoserine + succinyl-CoA = O-succinyl-L-homoserine + CoA. Its pathway is amino-acid biosynthesis; L-methionine biosynthesis via de novo pathway; O-succinyl-L-homoserine from L-homoserine: step 1/1. Functionally, transfers a succinyl group from succinyl-CoA to L-homoserine, forming succinyl-L-homoserine. In Cupriavidus necator (strain ATCC 17699 / DSM 428 / KCTC 22496 / NCIMB 10442 / H16 / Stanier 337) (Ralstonia eutropha), this protein is Homoserine O-succinyltransferase.